Here is a 73-residue protein sequence, read N- to C-terminus: MKSEIKKNDMVKVIAGDDKGKVAKVLAVLPKTSQVVVEGCKVVKKAIKPTDDNPKGGFIKKEKPMHISNVKKA.

The span at 53-65 (NPKGGFIKKEKPM) shows a compositional bias: basic and acidic residues. The segment at 53-73 (NPKGGFIKKEKPMHISNVKKA) is disordered.

The protein belongs to the universal ribosomal protein uL24 family. Part of the 50S ribosomal subunit.

One of two assembly initiator proteins, it binds directly to the 5'-end of the 23S rRNA, where it nucleates assembly of the 50S subunit. Its function is as follows. One of the proteins that surrounds the polypeptide exit tunnel on the outside of the subunit. This Helicobacter pylori (strain J99 / ATCC 700824) (Campylobacter pylori J99) protein is Large ribosomal subunit protein uL24.